Here is a 130-residue protein sequence, read N- to C-terminus: Cholecystokinin (130 aa).

The first 20 residues, 1 to 20 (MYSGICIYMFLAMLSTSSSG), serve as a signal peptide directing secretion. Residues 21-60 (QQATGSHNENPVATELEQSLTEHHRHVRVPSSAGQLKPIQ) constitute a propeptide that is removed on maturation. Position 112 is a sulfotyrosine (tyrosine 112). Phenylalanine 118 carries the post-translational modification Phenylalanine amide. The propeptide occupies 122 to 130 (SAEEYEYSS). Sulfotyrosine occurs at positions 126 and 128.

This sequence belongs to the gastrin/cholecystokinin family. In terms of processing, the precursor is cleaved by proteases to produce a number of active cholecystokinins. As to expression, expressed in brain, duodenum and small intestine.

Its subcellular location is the secreted. Its function is as follows. This peptide hormone induces gall bladder contraction and the release of pancreatic enzymes in the gut. Its function in the brain is not clear. This Trachemys scripta (Red-eared slider turtle) protein is Cholecystokinin.